The sequence spans 282 residues: UDP-N-acetylenolpyruvoylglucosamine reductase (282 aa).

Residues isoleucine 15 to lysine 179 form the FAD-binding PCMH-type domain. The active site involves arginine 157. Serine 207 serves as the catalytic Proton donor. Glutamate 278 is a catalytic residue.

It belongs to the MurB family. It depends on FAD as a cofactor.

Its subcellular location is the cytoplasm. The enzyme catalyses UDP-N-acetyl-alpha-D-muramate + NADP(+) = UDP-N-acetyl-3-O-(1-carboxyvinyl)-alpha-D-glucosamine + NADPH + H(+). It functions in the pathway cell wall biogenesis; peptidoglycan biosynthesis. Cell wall formation. This Francisella tularensis subsp. tularensis (strain SCHU S4 / Schu 4) protein is UDP-N-acetylenolpyruvoylglucosamine reductase.